The following is a 303-amino-acid chain: Major fimbrium anchoring subunit FimB (303 aa).

The N-terminal stretch at M1 to G22 is a signal peptide. Residue C23 is the site of N-palmitoyl cysteine attachment. C23 carries the S-diacylglycerol cysteine lipid modification.

This sequence belongs to the bacteroidetes fimbrillin superfamily. FimB/Mfa2 family. As to quaternary structure, fimB is not part of the fimbrium itself, but anchors the fimbrium in the outer membrane. Linear, head-to-tail oligomerization of fimbrial subunits mediates assembly of the fimbrium stalk, while the minor components FimC, FimD and FimE probably form the fimbrium tip. The anchoring subunit FimB limits fimbrium length and is important for solid fimbrium attachment to the outer membrane. In its absence, the major fimbriae become very long and are easily detached from the membrane.

It localises to the cell outer membrane. In terms of biological role, anchoring subunit of the major fimbriae. Regulates fimbrial length. These filamentous pili are attached to the cell surface; they mediate biofilm formation, adhesion onto host cells and onto other bacteria that are part of the oral microbiome. Fimbriae of P.gingivalis are major virulence factors. The polypeptide is Major fimbrium anchoring subunit FimB (Porphyromonas gingivalis (strain ATCC 33277 / DSM 20709 / CIP 103683 / JCM 12257 / NCTC 11834 / 2561)).